We begin with the raw amino-acid sequence, 245 residues long: Biosynthetic peptidoglycan transglycosylase (245 aa).

A helical membrane pass occupies residues 20-42; it reads VYAGSVFAGAWLATQLFYLVQIA.

The protein belongs to the glycosyltransferase 51 family.

The protein localises to the cell inner membrane. The enzyme catalyses [GlcNAc-(1-&gt;4)-Mur2Ac(oyl-L-Ala-gamma-D-Glu-L-Lys-D-Ala-D-Ala)](n)-di-trans,octa-cis-undecaprenyl diphosphate + beta-D-GlcNAc-(1-&gt;4)-Mur2Ac(oyl-L-Ala-gamma-D-Glu-L-Lys-D-Ala-D-Ala)-di-trans,octa-cis-undecaprenyl diphosphate = [GlcNAc-(1-&gt;4)-Mur2Ac(oyl-L-Ala-gamma-D-Glu-L-Lys-D-Ala-D-Ala)](n+1)-di-trans,octa-cis-undecaprenyl diphosphate + di-trans,octa-cis-undecaprenyl diphosphate + H(+). The protein operates within cell wall biogenesis; peptidoglycan biosynthesis. Its function is as follows. Peptidoglycan polymerase that catalyzes glycan chain elongation from lipid-linked precursors. This Burkholderia ambifaria (strain MC40-6) protein is Biosynthetic peptidoglycan transglycosylase.